A 408-amino-acid polypeptide reads, in one-letter code: Probable ethanolamine permease EutH (408 aa).

Helical transmembrane passes span 1-21 (MGINEIIMYIMMFFMLIAAVD), 61-81 (AMVGMTALAPVLAHVLGPVII), 89-109 (ANPSMFAGTLLACDMGGFFLA), 126-146 (ILGSMMGPTIVFSIPVALGII), 155-175 (ALGVLAGIVTIPIGCIAGGLI), 192-212 (FALILMNMIPVLIVAVLVALG), 230-250 (FLVALITIGLAAAVVKFLLGW), 274-294 (IEVIGSISCVLLGAYPMVLLL), 313-333 (NIAAAGMVATLANNIPMFGMM), 342-362 (VINCAFAVSAAFALGDHLGFA), and 369-389 (MIFPMIVGKLIGGVTAIGVAM).

The protein belongs to the EutH family.

It is found in the cell inner membrane. The catalysed reaction is ethanolamine(in) = ethanolamine(out). Its pathway is amine and polyamine degradation; ethanolamine degradation. In terms of biological role, probably involved in the diffusion of protonated ethanolamine (EA) into the cell at low pH. At low pH most EA is protonated, and this permease becomes necessary. Contributes to bacterial survival and replication in acidified macrophage vacuoles, but not to bacterial uptake by macrophages. Functionally, expression of the eut operon allows this bacteria to use ethanolamine (EA) as a carbon, nitrogen and energy source. It relies on cobalamin (vitamin B12) both as a cofactor for the ethanolamine ammonia-lyase (EAL) activity and to induce the operon. EA enhances bacterial survival in macrophages in a concentration-dependent manner, suggesting it is an important nutrient during infection. The polypeptide is Probable ethanolamine permease EutH (Salmonella typhimurium (strain LT2 / SGSC1412 / ATCC 700720)).